The following is a 102-amino-acid chain: MIVDKNKIVIPMSEFLDSMFLVIEKLGVHAEKKGSMIFLSSERVKLADWKQLGAMCSDCYHCKLPLSSFIEIVTRKAKDKFLVMYNEKEVTLVARGVQTIQK.

This is an uncharacterized protein from Acidianus filamentous virus 1 (isolate United States/Yellowstone) (AFV-1).